The chain runs to 826 residues: 1,4-alpha-glucan-branching enzyme 1, chloroplastic/amyloplastic (826 aa).

The transit peptide at Ala1–Val58 directs the protein to the chloroplast. Asp409 serves as the catalytic Nucleophile. Glu464 acts as the Proton donor in catalysis. The interval Asp782–Ala813 is disordered.

It belongs to the glycosyl hydrolase 13 family. GlgB subfamily. Monomer. Expressed in roots, leaves, stipules, pods and flowers.

It is found in the plastid. The protein resides in the chloroplast. The protein localises to the amyloplast. The catalysed reaction is Transfers a segment of a (1-&gt;4)-alpha-D-glucan chain to a primary hydroxy group in a similar glucan chain.. The protein operates within glycan biosynthesis; starch biosynthesis. In terms of biological role, catalyzes the formation of the alpha-1,6-glucosidic linkages in starch by scission of a 1,4-alpha-linked oligosaccharide from growing alpha-1,4-glucan chains and the subsequent attachment of the oligosaccharide to the alpha-1,6 position. May preferentially transfer long chains during branching. This chain is 1,4-alpha-glucan-branching enzyme 1, chloroplastic/amyloplastic (SBEII), found in Pisum sativum (Garden pea).